Here is a 245-residue protein sequence, read N- to C-terminus: Uridylate kinase (245 aa).

16–19 (KLSG) contributes to the ATP binding site. An involved in allosteric activation by GTP region spans residues 24 to 29 (GDNGFG). Position 59 (Gly59) interacts with UMP. ATP contacts are provided by Gly60 and Arg64. Residues Asp78 and 139-146 (NGAPFFTT) each bind UMP. ATP contacts are provided by Asn167, Tyr173, and Asp176.

This sequence belongs to the UMP kinase family. In terms of assembly, homohexamer.

The protein resides in the cytoplasm. It carries out the reaction UMP + ATP = UDP + ADP. The protein operates within pyrimidine metabolism; CTP biosynthesis via de novo pathway; UDP from UMP (UMPK route): step 1/1. Allosterically activated by GTP. Inhibited by UTP. Functionally, catalyzes the reversible phosphorylation of UMP to UDP. This is Uridylate kinase from Deinococcus radiodurans (strain ATCC 13939 / DSM 20539 / JCM 16871 / CCUG 27074 / LMG 4051 / NBRC 15346 / NCIMB 9279 / VKM B-1422 / R1).